The primary structure comprises 428 residues: Lysophosphatidic acid phosphatase type 6 (428 aa).

The N-terminal 32 residues, 1 to 32 (MITGVFSMRLWTPVGVLTSLAYCLHQRRVALA), are a transit peptide targeting the mitochondrion. A substrate binding region spans residues 58–168 (RHGARSPLKP…VFIRSTNIFR (111 aa)). His-59 (nucleophile) is an active-site residue. The Proton donor role is filled by Asp-335.

The protein belongs to the histidine acid phosphatase family. In terms of assembly, monomer. In terms of tissue distribution, highly expressed in kidney, heart, small intestine, muscle, liver, prostate, testis, ovary and weakly expressed in thymus and colon.

Its subcellular location is the mitochondrion. The catalysed reaction is a phosphate monoester + H2O = an alcohol + phosphate. It carries out the reaction 1-(9Z-octadecenoyl)-sn-glycero-3-phosphate + H2O = 1-(9Z-octadecenoyl)-sn-glycerol + phosphate. Hydrolyzes lysophosphatidic acid (LPA) containing a medium length fatty acid chain to the corresponding monoacylglycerol. Has highest activity with lysophosphatidic acid containing myristate (C14:0), monounsaturated oleate (C18:1) or palmitate (C16:0), and lower activity with C18:0 and C6:0 lysophosphatidic acid. This is Lysophosphatidic acid phosphatase type 6 (ACP6) from Homo sapiens (Human).